A 105-amino-acid polypeptide reads, in one-letter code: Small ribosomal subunit protein uS10 (105 aa).

It belongs to the universal ribosomal protein uS10 family. Part of the 30S ribosomal subunit.

Involved in the binding of tRNA to the ribosomes. In Rickettsia massiliae (strain Mtu5), this protein is Small ribosomal subunit protein uS10.